A 125-amino-acid chain; its full sequence is Putative iron-sulfur cluster insertion protein ErpA 2 (125 aa).

Positions 53, 117, and 119 each coordinate iron-sulfur cluster.

It belongs to the HesB/IscA family. In terms of assembly, homodimer. Iron-sulfur cluster is required as a cofactor.

Required for insertion of 4Fe-4S clusters. The polypeptide is Putative iron-sulfur cluster insertion protein ErpA 2 (Polaromonas naphthalenivorans (strain CJ2)).